The sequence spans 317 residues: Spermidine synthase 2 (317 aa).

Residues 27 to 264 (PGWFSEISPL…GMIGFMLCST (238 aa)) form the PABS domain. Glutamine 58 contributes to the S-adenosyl 3-(methylsulfanyl)propylamine binding site. Tyrosine 88 provides a ligand contact to putrescine. Residues glutamine 89, aspartate 113, glutamate 133, 164–165 (DG), and aspartate 183 contribute to the S-adenosyl 3-(methylsulfanyl)propylamine site. Aspartate 183 (proton acceptor) is an active-site residue. Putrescine-binding positions include 183 to 186 (DSSD) and tyrosine 252.

It belongs to the spermidine/spermine synthase family.

The catalysed reaction is S-adenosyl 3-(methylsulfanyl)propylamine + putrescine = S-methyl-5'-thioadenosine + spermidine + H(+). Its pathway is amine and polyamine biosynthesis; spermidine biosynthesis; spermidine from putrescine: step 1/1. The chain is Spermidine synthase 2 from Datura stramonium (Jimsonweed).